The following is a 137-amino-acid chain: ATP synthase epsilon chain, chloroplastic (137 aa).

It belongs to the ATPase epsilon chain family. F-type ATPases have 2 components, CF(1) - the catalytic core - and CF(0) - the membrane proton channel. CF(1) has five subunits: alpha(3), beta(3), gamma(1), delta(1), epsilon(1). CF(0) has three main subunits: a, b and c.

The protein resides in the plastid. It localises to the chloroplast thylakoid membrane. Its function is as follows. Produces ATP from ADP in the presence of a proton gradient across the membrane. In Pisum sativum (Garden pea), this protein is ATP synthase epsilon chain, chloroplastic.